Consider the following 135-residue polypeptide: Probable disulfide formation protein (135 aa).

The chain crosses the membrane as a helical span at residues 7-26 (SYCLYFAWLVSCIGTLMSVY). A disulfide bond links Cys-36 and Cys-39. Helical transmembrane passes span 41 to 60 (YQRI…AYLD) and 67 to 84 (YALP…YQVC). An intrachain disulfide couples Cys-96 to Cys-101. A helical transmembrane segment spans residues 109–131 (GFITMPMASALAFFAIANLLIFA).

This sequence belongs to the DsbB family. BdbC subfamily.

It is found in the cell inner membrane. In terms of biological role, required for disulfide bond formation in some proteins. In Chlamydia muridarum (strain MoPn / Nigg), this protein is Probable disulfide formation protein.